The following is an 801-amino-acid chain: MRCPSLARLPHRAISGLTRLPVRLQSQTFLYQRCASTAALRSPTAGPAYQSILNRHNLQRRNASAAAAAVLEAAASNPDALTQEAIIDNLDPVEATRLSRIRNIGIAAHIDSGKTTCTERILFYTGRIKAIHEVRGRDNVGAKMDSMDLEREKGITIQSAATFCDWVKKEDDGREEKYHINLIDTPGHIDFTIEVERALRVLDGAVMILCAVSGVQSQTITVDRQMRRYNVPRISFINKMDRMGANPFKAVDQINSKLKIPAAAVQVPIGAEDEFEGVVDLIRMKSIYNHGPSGEEIVIKDEIPEKVKSVVEERRRMLIETLADVDDEIAELFLDEKEPTQEQLKAAIRRATVGLKFTPVFMGTALSNKSVQPMLDGVIDYLPNPSEIENLALDQKRNEASVKLVPYNSQPFVGLAFKLEESNFGQLTYIRVYQGTLRKGANVFNARNNKKVKIPRIVRMHSNEMEEVSEIGAGEICAVFGVDCASGDSFTDGQLGYTMTSMFVPEPVISLSIKPKNNKDSANFSKAMARFQREDPTFRVTYDAESEQTLISGMGELHLDIYIERMRREYRVDCETGPPQVAYRETIGNKVEFDHLLKKQSGGPGDYARVVGWMEPTDKLEENKFEEQIVGGSISEKFLFACEKGFNLACEKGPLIGHKVLGTRMVINDGATHMTDSSEMSFKNATQQAFRKAFMESNPSVLEPMMKTVVTAPSEFQGDVISLLNKRNATINDTETGVDEFTVYADCSLNGMFGFSSHLRAATQGKGEYTMEFSHYEKAQPQLQKELIQKYLKAQADRHKK.

The transit peptide at 1-24 (MRCPSLARLPHRAISGLTRLPVRL) directs the protein to the mitochondrion. The 288-residue stretch at 99–386 (SRIRNIGIAA…GVIDYLPNPS (288 aa)) folds into the tr-type G domain. GTP-binding positions include 108 to 115 (AHIDSGKT), 184 to 188 (DTPGH), and 238 to 241 (NKMD).

Belongs to the TRAFAC class translation factor GTPase superfamily. Classic translation factor GTPase family. EF-G/EF-2 subfamily.

It localises to the mitochondrion. It functions in the pathway protein biosynthesis; polypeptide chain elongation. Mitochondrial GTPase that catalyzes the GTP-dependent ribosomal translocation step during translation elongation. During this step, the ribosome changes from the pre-translocational (PRE) to the post-translocational (POST) state as the newly formed A-site-bound peptidyl-tRNA and P-site-bound deacylated tRNA move to the P and E sites, respectively. Catalyzes the coordinated movement of the two tRNA molecules, the mRNA and conformational changes in the ribosome. This chain is Elongation factor G, mitochondrial (mef1), found in Aspergillus clavatus (strain ATCC 1007 / CBS 513.65 / DSM 816 / NCTC 3887 / NRRL 1 / QM 1276 / 107).